The chain runs to 386 residues: Trichocyst matrix protein T2-A (386 aa).

The signal sequence occupies residues 1–19; the sequence is MKTVILALALIVLASSTQA. A propeptide spanning residues 20–48 is cleaved from the precursor; sequence DVIATIKKIDQSPFGRTLFDTIYLELQTG. A coiled-coil region spans residues 51–154; the sequence is LDRLLSTLTD…AEEHEDFEEK (104 aa). A propeptide spanning residues 184–238 is cleaved from the precursor; the sequence is KGKATKQTHKFTKEVASMIQKHFTTSAKKTAKFQHRKGYSKLFKAFATIASKVEQ. The stretch at 293 to 332 forms a coiled coil; the sequence is SALANATSDLASLNDIIAQVEASLDTTEQRIENVSADRHD.

Belongs to the TMP family.

It is found in the trichocyst. Structural protein that crystallize inside the trichocyst matrix. The chain is Trichocyst matrix protein T2-A (T2A) from Paramecium tetraurelia.